The following is a 315-amino-acid chain: MSQPRIGQKVVVDVPATTANLGPGFDCLGAALDLNNRFAMRRIEGSGERFELIIEGTYGSHLRGGPDNLVYRAAQRVWKAANMEPVALEARVRLAVPPARGLGSSATAIVAGLMGANALVGEPLSKEKLLELAIDIEGHPDNVVPSLLGGLCMTAKAASQRWRVVRCEWISSVKAVVAIPSIRLSTSEARRAMPKAIPVSDAVVNLGALTLLLQGLRTGNGDLIADGMHDRLHEPYRWRLIKGGDDVKAAALEAGAWGCAISGAGPSIIALCAEDKGQAVSRAMVKAWEAAGVASRAPVLNLQTSGSHWQPADAG.

ATP is bound at residue 97-107 (PPARGLGSSAT).

Belongs to the GHMP kinase family. Homoserine kinase subfamily.

Its subcellular location is the cytoplasm. The catalysed reaction is L-homoserine + ATP = O-phospho-L-homoserine + ADP + H(+). The protein operates within amino-acid biosynthesis; L-threonine biosynthesis; L-threonine from L-aspartate: step 4/5. Catalyzes the ATP-dependent phosphorylation of L-homoserine to L-homoserine phosphate. This Parasynechococcus marenigrum (strain WH8102) protein is Homoserine kinase.